An 824-amino-acid chain; its full sequence is Translation initiation factor IF-2 (824 aa).

Disordered stretches follow at residues Met1 to Lys32 and Val45 to Gln232. The segment covering Val45–Lys57 has biased composition (low complexity). The span at Lys86–Ala144 shows a compositional bias: basic and acidic residues. Positions Ala145–Pro167 are enriched in low complexity. Residues Ala170–Arg193 are compositionally biased toward basic and acidic residues. One can recognise a tr-type G domain in the interval Thr321–Glu489. The G1 stretch occupies residues Gly330–Thr337. Residue Gly330–Thr337 participates in GTP binding. A G2 region spans residues Gly355–His359. The interval Asp377–Gly380 is G3. GTP is bound by residues Asp377–His381 and Asn431–Asp434. Residues Asn431–Asp434 form a G4 region. Residues Ser467–Ile469 form a G5 region.

Belongs to the TRAFAC class translation factor GTPase superfamily. Classic translation factor GTPase family. IF-2 subfamily.

It is found in the cytoplasm. Functionally, one of the essential components for the initiation of protein synthesis. Protects formylmethionyl-tRNA from spontaneous hydrolysis and promotes its binding to the 30S ribosomal subunits. Also involved in the hydrolysis of GTP during the formation of the 70S ribosomal complex. The polypeptide is Translation initiation factor IF-2 (Roseobacter denitrificans (strain ATCC 33942 / OCh 114) (Erythrobacter sp. (strain OCh 114))).